Here is a 581-residue protein sequence, read N- to C-terminus: NADH-quinone oxidoreductase subunit C/D (581 aa).

The interval 1 to 172 (MSGAELISDL…PPFVMTAARF (172 aa)) is NADH dehydrogenase I subunit C. Positions 196 to 581 (ELMILNYGPH…IDYVMSDVDR (386 aa)) are NADH dehydrogenase I subunit D.

The protein in the N-terminal section; belongs to the complex I 30 kDa subunit family. This sequence in the C-terminal section; belongs to the complex I 49 kDa subunit family. As to quaternary structure, NDH-1 is composed of 13 different subunits. Subunits NuoB, CD, E, F, and G constitute the peripheral sector of the complex.

Its subcellular location is the cell inner membrane. It carries out the reaction a quinone + NADH + 5 H(+)(in) = a quinol + NAD(+) + 4 H(+)(out). Its function is as follows. NDH-1 shuttles electrons from NADH, via FMN and iron-sulfur (Fe-S) centers, to quinones in the respiratory chain. The immediate electron acceptor for the enzyme in this species is believed to be ubiquinone. Couples the redox reaction to proton translocation (for every two electrons transferred, four hydrogen ions are translocated across the cytoplasmic membrane), and thus conserves the redox energy in a proton gradient. The sequence is that of NADH-quinone oxidoreductase subunit C/D from Rhodopseudomonas palustris (strain BisA53).